Reading from the N-terminus, the 203-residue chain is Urease accessory protein UreG (203 aa).

14–21 (GPVGSGKT) is a GTP binding site.

It belongs to the SIMIBI class G3E GTPase family. UreG subfamily. In terms of assembly, homodimer. UreD, UreF and UreG form a complex that acts as a GTP-hydrolysis-dependent molecular chaperone, activating the urease apoprotein by helping to assemble the nickel containing metallocenter of UreC. The UreE protein probably delivers the nickel.

Its subcellular location is the cytoplasm. In terms of biological role, facilitates the functional incorporation of the urease nickel metallocenter. This process requires GTP hydrolysis, probably effectuated by UreG. This chain is Urease accessory protein UreG, found in Rhizobium rhizogenes (strain K84 / ATCC BAA-868) (Agrobacterium radiobacter).